Reading from the N-terminus, the 148-residue chain is uncharacterized protein (148 aa).

This is an uncharacterized protein from Acheta domesticus (House cricket).